Reading from the N-terminus, the 1567-residue chain is ABC multidrug transporter MDR1 (1567 aa).

The span at 1–11 (MASQPPQPPSG) shows a compositional bias: pro residues. Residues 1–37 (MASQPPQPPSGQPDTQYEEYQSEVITETTNRPTPAAD) form a disordered region. Residues 22–32 (SEVITETTNRP) are compositionally biased toward polar residues. 3 N-linked (GlcNAc...) asparagine glycosylation sites follow: N149, N157, and N356. The region spanning 167–432 (VQYQDTFLSP…FEEMGWYCPP (266 aa)) is the ABC transporter 1 domain. A run of 6 helical transmembrane segments spans residues 543 to 563 (STIA…SLFF), 571 to 591 (GFFA…LMSI), 636 to 656 (IPIK…LGGL), 661 to 681 (AKFF…SAIF), 691 to 711 (IPQA…YTGF), and 798 to 818 (LGIL…VSEL). N-linked (GlcNAc...) asparagine glycans are attached at residues N819, N895, and N912. In terms of domain architecture, ABC transporter 2 spans 891-1134 (FTWRNVTYDI…LLNYFETHGA (244 aa)). ATP is bound at residue 927-934 (GVSGAGKT). The disordered stretch occupies residues 1172-1202 (ESRHVQQELDRIQSETSKRNEGHGQSAEKEP). A helical transmembrane segment spans residues 1231–1251 (IWGKLLLGLASALFIGFSFFL). A glycan (N-linked (GlcNAc...) asparagine) is linked at N1253. 5 helical membrane-spanning segments follow: residues 1257–1277 (AGLQ…SSLV), 1305–1325 (VFLL…GIIA), 1345–1365 (ILLL…QMII), 1372–1392 (ETAG…NGVL), and 1498–1518 (GIGW…YYLI).

It belongs to the ABC transporter superfamily. ABCG family. PDR (TC 3.A.1.205) subfamily.

Its subcellular location is the cell membrane. It carries out the reaction voriconazole(in) + ATP + H2O = voriconazole(out) + ADP + phosphate + H(+). The catalysed reaction is fluconazole(in) + ATP + H2O = fluconazole(out) + ADP + phosphate + H(+). The enzyme catalyses (R)-miconazole(in) + ATP + H2O = (R)-miconazole(out) + ADP + phosphate + H(+). It catalyses the reaction (S)-miconazole(in) + ATP + H2O = (S)-miconazole(out) + ADP + phosphate + H(+). In terms of biological role, pleiotropic ABC efflux transporter that may be involved in the modulation susceptibility to a wide range of unrelated cytotoxic compounds, including ethidium bromide, ketoconazole, cycloheximide, fluconazole, griseofulvin, imazalil and itraconazole. In Trichophyton interdigitale (strain MR816), this protein is ABC multidrug transporter MDR1.